The following is a 251-amino-acid chain: Probable transcriptional regulatory protein SYNPCC7002_A0851 (251 aa).

Residues 20-141 (RILVVEDEAV…ELVARCRALL (122 aa)) enclose the Response regulatory domain. A 4-aspartylphosphate modification is found at D76. Residues 153-251 (NSVRQFKDIS…TVRGFGYRFG (99 aa)) constitute a DNA-binding region (ompR/PhoB-type).

Post-translationally, phosphorylation.

The protein is Probable transcriptional regulatory protein SYNPCC7002_A0851 of Picosynechococcus sp. (strain ATCC 27264 / PCC 7002 / PR-6) (Agmenellum quadruplicatum).